Here is a 1196-residue protein sequence, read N- to C-terminus: MKTFSSFFLSVTTLFFFSFFSLSFQASPSQSLYREIHQLISFKDVLPDKNLLPDWSSNKNPCTFDGVTCRDDKVTSIDLSSKPLNVGFSAVSSSLLSLTGLESLFLSNSHINGSVSGFKCSASLTSLDLSRNSLSGPVTTLTSLGSCSGLKFLNVSSNTLDFPGKVSGGLKLNSLEVLDLSANSISGANVVGWVLSDGCGELKHLAISGNKISGDVDVSRCVNLEFLDVSSNNFSTGIPFLGDCSALQHLDISGNKLSGDFSRAISTCTELKLLNISSNQFVGPIPPLPLKSLQYLSLAENKFTGEIPDFLSGACDTLTGLDLSGNHFYGAVPPFFGSCSLLESLALSSNNFSGELPMDTLLKMRGLKVLDLSFNEFSGELPESLTNLSASLLTLDLSSNNFSGPILPNLCQNPKNTLQELYLQNNGFTGKIPPTLSNCSELVSLHLSFNYLSGTIPSSLGSLSKLRDLKLWLNMLEGEIPQELMYVKTLETLILDFNDLTGEIPSGLSNCTNLNWISLSNNRLTGEIPKWIGRLENLAILKLSNNSFSGNIPAELGDCRSLIWLDLNTNLFNGTIPAAMFKQSGKIAANFIAGKRYVYIKNDGMKKECHGAGNLLEFQGIRSEQLNRLSTRNPCNITSRVYGGHTSPTFDNNGSMMFLDMSYNMLSGYIPKEIGSMPYLFILNLGHNDISGSIPDEVGDLRGLNILDLSSNKLDGRIPQAMSALTMLTEIDLSNNNLSGPIPEMGQFETFPPAKFLNNPGLCGYPLPRCDPSNADGYAHHQRSHGRRPASLAGSVAMGLLFSFVCIFGLILVGREMRKRRRKKEAELEMYAEGHGNSGDRTANNTNWKLTGVKEALSINLAAFEKPLRKLTFADLLQATNGFHNDSLIGSGGFGDVYKAILKDGSAVAIKKLIHVSGQGDREFMAEMETIGKIKHRNLVPLLGYCKVGDERLLVYEFMKYGSLEDVLHDPKKAGVKLNWSTRRKIAIGSARGLAFLHHNCSPHIIHRDMKSSNVLLDENLEARVSDFGMARLMSAMDTHLSVSTLAGTPGYVPPEYYQSFRCSTKGDVYSYGVVLLELLTGKRPTDSPDFGDNNLVGWVKQHAKLRISDVFDPELMKEDPALEIELLQHLKVAVACLDDRAWRRPTMVQVMAMFKEIQAGSGIDSQSTIRSIEDGGFSTIEMVDMSIKEVPEGKL.

An N-terminal signal peptide occupies residues 1-23 (MKTFSSFFLSVTTLFFFSFFSLS). Residues 62–69 (CTFDGVTC) carry the Cys pair 1 motif. LRR repeat units follow at residues 71-98 (DDKV…LLSL), 99-121 (TGLE…FKCS), 122-146 (ASLT…SLGS), 148-169 (SGLK…VSGG), 172-197 (LNSL…VLSD), 199-221 (CGEL…VSRC), 222-244 (VNLE…LGDC), 245-268 (SALQ…ISTC), 269-290 (TELK…PLPL), 291-314 (KSLQ…LSGA), 316-338 (DTLT…FFGS), 339-363 (CSLL…TLLK), 364-388 (MRGL…LTNL), 390-413 (ASLL…LCQN), 415-439 (KNTL…LSNC), 441-463 (ELVS…LGSL), 464-487 (SKLR…LMYV), 488-511 (KTLE…LSNC), 513-535 (NLNW…IGRL), 536-559 (ENLA…LGDC), and 561-583 (SLIW…MFKQ). N-linked (GlcNAc...) asparagine glycosylation is present at N112. N-linked (GlcNAc...) asparagine glycosylation occurs at N154. N233 is a glycosylation site (N-linked (GlcNAc...) asparagine). N-linked (GlcNAc...) asparagine glycosylation occurs at N275. N-linked (GlcNAc...) asparagine glycans are attached at residues N351, N387, N401, and N438. N-linked (GlcNAc...) asparagine glycosylation is present at N510. N-linked (GlcNAc...) asparagine glycosylation is found at N545 and N573. Brassinolide is bound at residue Y597. N-linked (GlcNAc...) asparagine glycosylation occurs at N636. Residues 640–642 (RVY) form an SERK1 binding region. Brassinolide contacts are provided by Y642 and S647. The N-linked (GlcNAc...) asparagine glycan is linked to N653. LRR repeat units lie at residues 653–677 (NGSM…IGSM), 678–701 (PYLF…VGDL), 702–725 (RGLN…MSAL), and 727–750 (MLTE…QFET). N705 is a brassinolide binding site. Positions 726–729 (TMLT) are SERK1 binding. Residue N737 is glycosylated (N-linked (GlcNAc...) asparagine). An SERK1 binding region spans residues 746-750 (GQFET). The Cys pair 2 signature appears at 763–770 (CGYPLPRC). Residues 793–813 (AGSVAMGLLFSFVCIFGLILV) form a helical membrane-spanning segment. A Phosphotyrosine modification is found at Y831. S838 is modified (phosphoserine). Residues T842, T846, and T851 each carry the phosphothreonine modification. S858 is subject to Phosphoserine. Residues T872 and T880 each carry the phosphothreonine modification. A Protein kinase domain is found at 883 to 1158 (FHNDSLIGSG…VQVMAMFKEI (276 aa)). 2 positions are modified to phosphoserine: S887 and S891. ATP is bound by residues 889–897 (IGSGGFGDV) and K911. Y956 is modified (phosphotyrosine). Residues 957–959 (EFM) and 963–966 (SLED) contribute to the ATP site. S981 is subject to Phosphoserine. Position 982 is a phosphothreonine (T982). Residue D1009 is the Proton acceptor of the active site. Residues 1009 to 1014 (DMKSSN) and D1027 contribute to the ATP site. At S1035 the chain carries Phosphoserine. T1039 carries the phosphothreonine modification. S1042 and S1044 each carry phosphoserine. Phosphothreonine is present on residues T1045 and T1049. Y1052 carries the phosphotyrosine modification. S1060 carries the phosphoserine modification. Y1072 carries the phosphotyrosine modification. 2 positions are modified to phosphoserine: S1166 and S1168. T1169 is modified (phosphothreonine). A phosphoserine mark is found at S1172 and S1179. T1180 is modified (phosphothreonine). Phosphoserine is present on S1187.

This sequence belongs to the protein kinase superfamily. Ser/Thr protein kinase family. In terms of assembly, monomer or homodimer in the plasma membrane. Heterodimer with BAK1 in the endosomes. Interacts with SERK1 and TTL in a kinase-dependent manner. Bind to SERK1 in a brassinolide-dependent manner. Component of the SERK1 signaling complex, composed of KAPP, CDC48A, GRF6 or GRF7, SERK1, SERK2, SERK3/BAK1 and BRI1. Interacts with CDG1. No interactions with PSKR1 or CNGC17. Interacts with BIK1. Interacts with B'ALPHA, B'BETA, B'GAMMA and B'ETA. Interacts with BSK1 and BSK3. Interacts with BSK5, BSK6 and BSK11. Autophosphorylated on Tyr-831, Tyr-956 and maybe Tyr-1072. Phosphorylated on at least 12 sites, with a preference for Ser residues. Transphosphorylated on Ser-887 by SERK1 and on Ser-838, Thr-846, Ser-858 and Ser-1166 by BAK1. Phosphorylation on Ser-1166 enhances the kinase activity. In terms of processing, glycosylated. As to expression, expressed ubiquitously.

The protein localises to the cell membrane. It localises to the endosome membrane. The catalysed reaction is L-seryl-[protein] + ATP = O-phospho-L-seryl-[protein] + ADP + H(+). It carries out the reaction L-threonyl-[protein] + ATP = O-phospho-L-threonyl-[protein] + ADP + H(+). It catalyses the reaction L-tyrosyl-[protein] + ATP = O-phospho-L-tyrosyl-[protein] + ADP + H(+). Activated by Ser and Thr phosphorylation. In terms of biological role, receptor with a dual specificity kinase activity acting on both serine/threonine- and tyrosine-containing substrates. Regulates, in response to brassinosteroid binding, a signaling cascade involved in plant development, including expression of light- and stress-regulated genes, promotion of cell elongation, normal leaf and chloroplast senescence, and flowering. Binds brassinolide (BL), and less effectively castasterone (CS), but not 2,3,22,23-O-tetramethylbrassinolide or ecdysone. May be involved in a feedback regulation of brassinosteroid biosynthesis. Phosphorylates BRI1-associated receptor kinase 1 (BAK1), Transthyretin-Like protein (TTL) and SERK1 on 'Ser-299' and 'Thr-462' in vitro. May have a guanylyl cyclase activity. Phosphorylates BSK1, BSK2 and BSK3 in vitro. Phosphorylates BSK1, BSK3, BSK5, BSK6, BSK8 and BSK11 in vitro. The polypeptide is Protein BRASSINOSTEROID INSENSITIVE 1 (Arabidopsis thaliana (Mouse-ear cress)).